The primary structure comprises 204 residues: MTENILRKSDEEIQKEITARVKALESMLIEQGILTTSMIDRMAEIYENEVGPHLGAKVVVKAWTDPEFKKRLLADGTEACKELGIGGLQGEDMMWVENTDEVHHVVVCTLCSCYPWPVLGLPPNWFKEPQYRSRVVREPRQLLKEEFGFEVPPSKEIKVWDSSSEMRFVVLPQRPAGTDGWSEEELATLVTRESMIGVEPAKAV.

Co(2+) contacts are provided by Cys108, Cys111, Ser112, and Cys113. The residue at position 111 (Cys111) is a Cysteine sulfinic acid (-SO2H). Residue Cys113 is modified to Cysteine sulfenic acid (-SOH).

Belongs to the nitrile hydratase subunit alpha family. As to quaternary structure, heterotetramer of two alpha and two beta chains. It depends on Co(2+) as a cofactor.

It carries out the reaction an aliphatic primary amide = an aliphatic nitrile + H2O. Functionally, NHase catalyzes the hydration of various nitrile compounds to the corresponding amides. This is Cobalt-containing nitrile hydratase subunit alpha from Pseudonocardia thermophila.